Here is a 294-residue protein sequence, read N- to C-terminus: Type 4 apparatus protein DotZ (294 aa).

In terms of assembly, the T4BSS is a complex nanomachine composed of several subcomplexes. This subunit is part of the Type IV Coupling Complex (T4CC), a subcomplex composed of the DotLMNYZ core and the IcmSW-LvgA adapter subunits, linked by the C-terminal tail of DotL. Six DotLMNYZ hetero-pentameric units may assemble into a hexameric nanomachine, forming an inner membrane channel for effectors to pass through. Makes significant contact with DotN and DotY, but engages weakly with DotM and DotL. DotY and DotZ are co-dependent for the assembly into the T4CC.

The protein resides in the cytoplasm. Functionally, component of the Dot/Icm type IVB secretion system (T4BSS), which is used to inject bacterial effector proteins into eukaryotic host cells. Part of a subcomplex which recruits effector proteins and delivers them to the core transmembrane subcomplex. DotY and DotZ play a role in effector translocation, but are not essential and do not influence the stability of the subcomplex main components. The DotY/DotZ main function is to optimize secretion by modulating the delivery trajectory of the IcmSW module and the localization of the machinery to the poles. This is Type 4 apparatus protein DotZ from Legionella pneumophila subsp. pneumophila (strain Philadelphia 1 / ATCC 33152 / DSM 7513).